A 303-amino-acid chain; its full sequence is Thioesterase poxG (303 aa).

It belongs to the lcsJ thioesterase family.

It functions in the pathway secondary metabolite biosynthesis. Its function is as follows. Thioesterase; part of the gene cluster that mediates the biosynthesis of oxaleimides, cytotoxic compounds containing an unusual disubstituted succinimide moiety. The first step of the pathway is provided by the HR-PKS poxF that serves in a new mode of collaborative biosynthesis with the PKS-NRPS poxE, by providing the olefin containing amino acid substrate via the synthesis of an ACP-bound dec-4-enoate. The cytochrome P450 monooxygenase poxM-catalyzed oxidation at the alpha-position creates the enzyme-bound 2-hydroxydec-4-enoyl-ACP thioester, which may be prone to spontaneous hydrolysis to yield 2-hydroxydec-4-enoic acid due to increased electrophilicity of the carbonyl. 2-hydroxydec-4-enoic acid can then be further oxidized by poxM to yield the alpha-ketoacid 2-oxodec-4-enoicacid, which is reductively aminated by the aminotransferase poxL to yield (S,E)-2-aminodec-4-enoic acid. The Hybrid PKS-NRPS synthetase poxE then performs condensation between the octaketide product of its PKS modules and the amino group of (S,E)-2-aminodec-4-enoic acid which is activated and incorporated by the adenylation domain. The resulting aminoacyl product can be cyclized by the Diels-Alderase PoxQ and reductively released by the reductive (R) domain of poxE to yield an aldehyde intermediate. The released aldehyde is then substrate for a Knoevenagel condensation by the hydrolyase poxO followed by an oxidation at the 5-position of the pyrrolidone ring. The presence of the olefin from the amino acid building block allows for migration of the substituted allyl group to occur. This allylic transposition reaction takes place in a conjugate addition, semipinacol-like fashion to yield a succinimide intermediate. Iterative two-electron oxidations of the C7 methyl of the succinimide intermediate to the carboxylic acid can be catalyzed by one of two remaining cytochrome P450 monooxygenasess poxC or poxD to yield oxaleimide A. Subsequent oxidation yields the maleimide scaffold oxaleimide I. Both oxaleimide A and oxaleimide I can undergo oxidative modifications in the decalin ring to yield the series of products oxaleimides B to H. The polypeptide is Thioesterase poxG (Penicillium oxalicum (strain 114-2 / CGMCC 5302) (Penicillium decumbens)).